The sequence spans 560 residues: Zinc finger protein 619 (560 aa).

C2H2-type zinc fingers lie at residues 188–210 (YKCG…QRVH), 216–238 (YTCK…QKIH), 244–266 (YSCE…QKLH), 272–294 (YECT…QRIH), 300–322 (FKCK…ERIH), 328–350 (YECK…QRIH), 356–378 (YECK…QRFH), 384–406 (YKCN…QRIH), 412–434 (YECQ…QRVH), and 440–462 (YECK…QKWH).

It belongs to the krueppel C2H2-type zinc-finger protein family.

It localises to the nucleus. Its function is as follows. May be involved in transcriptional regulation. The protein is Zinc finger protein 619 (ZNF619) of Homo sapiens (Human).